Here is a 319-residue protein sequence, read N- to C-terminus: NADH-quinone oxidoreductase subunit H 2 (319 aa).

Helical transmembrane passes span 1-21, 77-97, 107-127, 147-167, 179-199, 214-234, 238-258, 262-282, and 293-313; these read MIGM…LLVL, ILAP…VAIG, VGLL…VLGA, LAYE…AGSF, VWFV…GIAA, LIAG…FLGE, VLLV…GPWL, VWFG…RATL, and FAWK…GIVV.

It belongs to the complex I subunit 1 family. In terms of assembly, NDH-1 is composed of 14 different subunits. Subunits NuoA, H, J, K, L, M, N constitute the membrane sector of the complex.

Its subcellular location is the cell inner membrane. It catalyses the reaction a quinone + NADH + 5 H(+)(in) = a quinol + NAD(+) + 4 H(+)(out). NDH-1 shuttles electrons from NADH, via FMN and iron-sulfur (Fe-S) centers, to quinones in the respiratory chain. The immediate electron acceptor for the enzyme in this species is believed to be ubiquinone. Couples the redox reaction to proton translocation (for every two electrons transferred, four hydrogen ions are translocated across the cytoplasmic membrane), and thus conserves the redox energy in a proton gradient. This subunit may bind ubiquinone. This Rhodopseudomonas palustris (strain ATCC BAA-98 / CGA009) protein is NADH-quinone oxidoreductase subunit H 2.